A 376-amino-acid chain; its full sequence is Pregnancy-associated glycoprotein 2 (376 aa).

The N-terminal stretch at 1–15 (MKWLVLLGLVALSEC) is a signal peptide. N-linked (GlcNAc...) asparagine glycosylation is found at N51 and N71. In terms of domain architecture, Peptidase A1 spans 68–373 (YVGNITIGTP…DRKNRRIGLA (306 aa)). Residue D86 is part of the active site. C99 and C104 form a disulfide bridge. Residues N114, N248, and N252 are each glycosylated (N-linked (GlcNAc...) asparagine). Residues C258 and C262 are joined by a disulfide bond. The active site involves D267. An intrachain disulfide couples C300 to C333. N-linked (GlcNAc...) asparagine glycosylation is present at N343.

This sequence belongs to the peptidase A1 family. Post-translationally, N-Glycosylated; the glycans terminate in either N-acetyl-galactosamine (GalNAc) or N-acetyllactosamine. Terminal GalNAc on Asn-linked glycans is greatly reduced prior to parturition while lactosamine-type N-glycans remain unaltered. As to expression, trophoblast and placental tissue. Localized to both the mononucleate and binucleate cells of the trophectoderm.

Its subcellular location is the secreted. It localises to the extracellular space. Its function is as follows. PAG2 or a processed derivative of this molecule might represent a factor that binds the LH receptor. The chain is Pregnancy-associated glycoprotein 2 (PAG2) from Bos taurus (Bovine).